A 241-amino-acid chain; its full sequence is tRNA (guanine-N(1)-)-methyltransferase (241 aa).

Residues Gly108 and 127 to 132 each bind S-adenosyl-L-methionine; that span reads LGDYVL.

The protein belongs to the RNA methyltransferase TrmD family. As to quaternary structure, homodimer.

Its subcellular location is the cytoplasm. The catalysed reaction is guanosine(37) in tRNA + S-adenosyl-L-methionine = N(1)-methylguanosine(37) in tRNA + S-adenosyl-L-homocysteine + H(+). In terms of biological role, specifically methylates guanosine-37 in various tRNAs. This Streptococcus suis (strain 98HAH33) protein is tRNA (guanine-N(1)-)-methyltransferase.